The chain runs to 98 residues: Integration host factor subunit beta (98 aa).

The protein belongs to the bacterial histone-like protein family. As to quaternary structure, heterodimer of an alpha and a beta chain.

In terms of biological role, this protein is one of the two subunits of integration host factor, a specific DNA-binding protein that functions in genetic recombination as well as in transcriptional and translational control. This Pseudomonas putida (strain W619) protein is Integration host factor subunit beta.